Consider the following 270-residue polypeptide: Formamidopyrimidine-DNA glycosylase (270 aa).

Catalysis depends on Pro-2, which acts as the Schiff-base intermediate with DNA. Residue Glu-3 is the Proton donor of the active site. Lys-58 (proton donor; for beta-elimination activity) is an active-site residue. His-91, Arg-110, and Lys-151 together coordinate DNA. An FPG-type zinc finger spans residues Leu-236 to Arg-270. The active-site Proton donor; for delta-elimination activity is the Arg-260.

Belongs to the FPG family. In terms of assembly, monomer. The cofactor is Zn(2+).

It carries out the reaction Hydrolysis of DNA containing ring-opened 7-methylguanine residues, releasing 2,6-diamino-4-hydroxy-5-(N-methyl)formamidopyrimidine.. The catalysed reaction is 2'-deoxyribonucleotide-(2'-deoxyribose 5'-phosphate)-2'-deoxyribonucleotide-DNA = a 3'-end 2'-deoxyribonucleotide-(2,3-dehydro-2,3-deoxyribose 5'-phosphate)-DNA + a 5'-end 5'-phospho-2'-deoxyribonucleoside-DNA + H(+). Functionally, involved in base excision repair of DNA damaged by oxidation or by mutagenic agents. Acts as a DNA glycosylase that recognizes and removes damaged bases. Has a preference for oxidized purines, such as 7,8-dihydro-8-oxoguanine (8-oxoG). Has AP (apurinic/apyrimidinic) lyase activity and introduces nicks in the DNA strand. Cleaves the DNA backbone by beta-delta elimination to generate a single-strand break at the site of the removed base with both 3'- and 5'-phosphates. This is Formamidopyrimidine-DNA glycosylase from Marinobacter nauticus (strain ATCC 700491 / DSM 11845 / VT8) (Marinobacter aquaeolei).